We begin with the raw amino-acid sequence, 141 residues long: Large ribosomal subunit protein uL11 (141 aa).

It belongs to the universal ribosomal protein uL11 family. In terms of assembly, part of the ribosomal stalk of the 50S ribosomal subunit. Interacts with L10 and the large rRNA to form the base of the stalk. L10 forms an elongated spine to which L12 dimers bind in a sequential fashion forming a multimeric L10(L12)X complex. In terms of processing, one or more lysine residues are methylated.

Functionally, forms part of the ribosomal stalk which helps the ribosome interact with GTP-bound translation factors. This is Large ribosomal subunit protein uL11 from Gloeothece citriformis (strain PCC 7424) (Cyanothece sp. (strain PCC 7424)).